Reading from the N-terminus, the 202-residue chain is Holliday junction branch migration complex subunit RuvA (202 aa).

Residues 1–64 (MIGRLRGSLA…EDAHLLYGFY (64 aa)) form a domain I region. The domain II stretch occupies residues 65-143 (EKRERELFRE…AWEALPGTFT (79 aa)). Residues 144 to 153 (LVSNGPNQAE) are flexible linker. Positions 154–202 (PVASAESDAVSALISLGYKPQEASKAVSAIKEKDLSSADLIRRALKGMG) are domain III.

The protein belongs to the RuvA family. As to quaternary structure, homotetramer. Forms an RuvA(8)-RuvB(12)-Holliday junction (HJ) complex. HJ DNA is sandwiched between 2 RuvA tetramers; dsDNA enters through RuvA and exits via RuvB. An RuvB hexamer assembles on each DNA strand where it exits the tetramer. Each RuvB hexamer is contacted by two RuvA subunits (via domain III) on 2 adjacent RuvB subunits; this complex drives branch migration. In the full resolvosome a probable DNA-RuvA(4)-RuvB(12)-RuvC(2) complex forms which resolves the HJ.

The protein localises to the cytoplasm. Its function is as follows. The RuvA-RuvB-RuvC complex processes Holliday junction (HJ) DNA during genetic recombination and DNA repair, while the RuvA-RuvB complex plays an important role in the rescue of blocked DNA replication forks via replication fork reversal (RFR). RuvA specifically binds to HJ cruciform DNA, conferring on it an open structure. The RuvB hexamer acts as an ATP-dependent pump, pulling dsDNA into and through the RuvAB complex. HJ branch migration allows RuvC to scan DNA until it finds its consensus sequence, where it cleaves and resolves the cruciform DNA. In Pseudomonas syringae pv. syringae (strain B728a), this protein is Holliday junction branch migration complex subunit RuvA.